Here is a 417-residue protein sequence, read N- to C-terminus: Gamma-glutamyl phosphate reductase (417 aa).

It belongs to the gamma-glutamyl phosphate reductase family.

The protein localises to the cytoplasm. The catalysed reaction is L-glutamate 5-semialdehyde + phosphate + NADP(+) = L-glutamyl 5-phosphate + NADPH + H(+). It participates in amino-acid biosynthesis; L-proline biosynthesis; L-glutamate 5-semialdehyde from L-glutamate: step 2/2. Functionally, catalyzes the NADPH-dependent reduction of L-glutamate 5-phosphate into L-glutamate 5-semialdehyde and phosphate. The product spontaneously undergoes cyclization to form 1-pyrroline-5-carboxylate. The sequence is that of Gamma-glutamyl phosphate reductase from Desulfitobacterium hafniense (strain DSM 10664 / DCB-2).